Reading from the N-terminus, the 802-residue chain is Ribosome-releasing factor 2, mitochondrial (802 aa).

Residues 13 to 297 enclose the tr-type G domain; the sequence is KKIRNIGIIA…AVVDFLPSPA (285 aa). GTP-binding positions include 22 to 29, 86 to 90, and 140 to 143; these read AHIDAGKT, DTPGH, and NKMD.

It belongs to the TRAFAC class translation factor GTPase superfamily. Classic translation factor GTPase family. EF-G/EF-2 subfamily.

The protein resides in the mitochondrion. Its function is as follows. Mitochondrial GTPase that mediates the disassembly of ribosomes from messenger RNA at the termination of mitochondrial protein biosynthesis. Not involved in the GTP-dependent ribosomal translocation step during translation elongation. In Yarrowia lipolytica (strain CLIB 122 / E 150) (Yeast), this protein is Ribosome-releasing factor 2, mitochondrial.